We begin with the raw amino-acid sequence, 1388 residues long: Dicer-like protein 2 (1388 aa).

The 181-residue stretch at 23–203 (MLEASMKENI…LLTVESNLDA (181 aa)) folds into the Helicase ATP-binding domain. Position 36–43 (36–43 (MDTGSGKT)) interacts with ATP. The DEAH box signature appears at 144–147 (DEAH). A Helicase C-terminal domain is found at 371–537 (SLLNFLDSLD…DDERQLQSVS (167 aa)). The region spanning 564–658 (AMAHLHHFCA…LPLTKRPELK (95 aa)) is the Dicer dsRNA-binding fold domain. RNase III domains follow at residues 919–1059 (ATRL…MDGG) and 1098–1281 (NERL…VDSG). Mg(2+)-binding residues include E1137, D1267, and E1270.

Belongs to the helicase family. Dicer subfamily. The cofactor is Mg(2+). Mn(2+) is required as a cofactor.

Functionally, dicer-like endonuclease involved in cleaving double-stranded RNA in the RNA interference (RNAi) pathway. Produces 21 to 25 bp dsRNAs (siRNAs) which target the selective destruction of homologous RNAs leading to sequence-specific suppression of gene expression, called post-transcriptional gene silencing (PTGS). Part of a broad host defense response against viral infection and transposons. This Neosartorya fischeri (strain ATCC 1020 / DSM 3700 / CBS 544.65 / FGSC A1164 / JCM 1740 / NRRL 181 / WB 181) (Aspergillus fischerianus) protein is Dicer-like protein 2 (dcl2).